The following is a 439-amino-acid chain: Aspartate--tRNA(Asp/Asn) ligase (439 aa).

E177 is an L-aspartate binding site. The interval 199 to 202 (QLYK) is aspartate. R221 is a binding site for L-aspartate. ATP is bound by residues 221-223 (RAE), 229-231 (RHL), and E362. 2 residues coordinate Mg(2+): E362 and S365. Positions 365 and 369 each coordinate L-aspartate. ATP is bound at residue 410 to 413 (GADR).

Belongs to the class-II aminoacyl-tRNA synthetase family. Type 2 subfamily. Homodimer. Mg(2+) serves as cofactor.

The protein localises to the cytoplasm. It catalyses the reaction tRNA(Asx) + L-aspartate + ATP = L-aspartyl-tRNA(Asx) + AMP + diphosphate. In terms of biological role, aspartyl-tRNA synthetase with relaxed tRNA specificity since it is able to aspartylate not only its cognate tRNA(Asp) but also tRNA(Asn). Reaction proceeds in two steps: L-aspartate is first activated by ATP to form Asp-AMP and then transferred to the acceptor end of tRNA(Asp/Asn). This Methanosphaera stadtmanae (strain ATCC 43021 / DSM 3091 / JCM 11832 / MCB-3) protein is Aspartate--tRNA(Asp/Asn) ligase.